Here is a 730-residue protein sequence, read N- to C-terminus: MVRWQTWPLLLLFQLVTCQQLQQRIVEAPKDTLAAVGETAILTCRVEHQQGPVQWMKDDFGLGTDRDKPLPGNKRYRMVGSAANGEYNLEISNVTLFDDDDFACQISESDHAKAVVSSKAKLTVLVRPTPPKIVKSHHSLKAIAGDPITQSCLSRKGKPPPTIGWAIASDEHGKHIVSWLGESRSKFGGIHAKPEISQETVIAHVNETTQVEEGGNNSREDSSIYSIMSNLSFIPRPEDDHKYLICISQHMTFPNKIEVDSVKLSLRYAPQINLTVASKLPLRENGSALLACNVNAKPLDNVKISWYKGNQKLRETGDTLTFETLKMEDHNRDIFCEATNEIGTTRGSIKLNVAFGARIMSTSQDKEVNEGDNAFFHCATLANPAPAIFWTRGDSDEIIGHGENLTLENVRTWQQGNYNCTATVEGFRKQILSHYLHIRGPPTVSMKDEVSASLDEATEIICEISGRPKTNNVRWTVNGKEINFNNGRITVHQYPKPYGKESILKIKDLKEEDFGVYNCSANNGLGFDNRGTLLKKRNILDWIVITAKFDRMVALAIISAGVLLVSLLCCLCMCRSNCRSRKSKFIDDQSDVTVKCEALDGQYFPEMYSSSPVDNVHLSTKDYISIPQNNPDLDFLGATGSFGPPGGLYPKCFNNSANEYIYNRYEHSYGSFGSGLSTPGGVSDMYGVAMSDKLPVMETLQEVETPKTSNYNFLSSPEVVRPISRTSTHV.

The signal sequence occupies residues 1-18 (MVRWQTWPLLLLFQLVTC). Topologically, residues 19–551 (QQLQQRIVEA…WIVITAKFDR (533 aa)) are extracellular. 5 consecutive Ig-like domains span residues 23–123 (QRIV…AKLT), 131–265 (PKIV…VKLS), 270–352 (PQIN…IKLN), 357–433 (ARIM…QILS), and 441–540 (PPTV…RNIL). Cystine bridges form between Cys44–Cys104, Cys152–Cys246, Cys292–Cys336, Cys378–Cys420, and Cys462–Cys519. N-linked (GlcNAc...) asparagine glycosylation is found at Asn93 and Asn206. The helical transmembrane segment at 552-572 (MVALAIISAGVLLVSLLCCLC) threads the bilayer. Residues 573 to 730 (MCRSNCRSRK…RPISRTSTHV (158 aa)) are Cytoplasmic-facing.

Belongs to the immunoglobulin superfamily. As to quaternary structure, interacts with skr-1. Interacts with syg-2. Interacts with the WAVE regulatory complex; the interaction leads to formation of a synaptic F-actin network that is required for synapse formation and axon branching. As to expression, expression in head motor neurons, occasionally in HSN neurons and weakly in other cells in the vulval region. Expressed in the primary synapse region of HSNL motor neuron.

The protein resides in the cell membrane. It localises to the cell projection. Its subcellular location is the axon. The protein localises to the synapse. Its function is as follows. Cell adhesion protein. Involved in synapse formation in the HSNL egg-laying motor neuron. Inhibits assembly of the SCF(sel-10) E3 ubiquitin ligase complex at synapses, and protects them from elimination. Also required for F-actin assembly at the synaptic region and for axon branch formation. The protein is Synaptogenesis protein syg-1 of Caenorhabditis elegans.